The sequence spans 652 residues: DNA ligase (652 aa).

NAD(+) is bound by residues 29–33 (DSDYD), 78–79 (SL), and Glu107. Lys109 acts as the N6-AMP-lysine intermediate in catalysis. The NAD(+) site is built by Arg130, Glu164, Lys278, and Lys302. Residues Cys395, Cys398, Cys413, and Cys418 each coordinate Zn(2+). Positions 577 to 652 (NSDAALFGLT…IEDEDWLRQL (76 aa)) constitute a BRCT domain.

Belongs to the NAD-dependent DNA ligase family. LigA subfamily. Requires Mg(2+) as cofactor. It depends on Mn(2+) as a cofactor.

The enzyme catalyses NAD(+) + (deoxyribonucleotide)n-3'-hydroxyl + 5'-phospho-(deoxyribonucleotide)m = (deoxyribonucleotide)n+m + AMP + beta-nicotinamide D-nucleotide.. In terms of biological role, DNA ligase that catalyzes the formation of phosphodiester linkages between 5'-phosphoryl and 3'-hydroxyl groups in double-stranded DNA using NAD as a coenzyme and as the energy source for the reaction. It is essential for DNA replication and repair of damaged DNA. The sequence is that of DNA ligase from Streptococcus pyogenes serotype M49 (strain NZ131).